The primary structure comprises 151 residues: Desiccation-related protein PCC27-45 (151 aa).

The protein belongs to the LEA type 2 family.

In Craterostigma plantagineum (Blue gem), this protein is Desiccation-related protein PCC27-45.